The primary structure comprises 293 residues: tRNA pseudouridine synthase B (293 aa).

The active-site Nucleophile is Asp-40.

Belongs to the pseudouridine synthase TruB family. Type 1 subfamily.

The enzyme catalyses uridine(55) in tRNA = pseudouridine(55) in tRNA. Responsible for synthesis of pseudouridine from uracil-55 in the psi GC loop of transfer RNAs. This is tRNA pseudouridine synthase B from Mycolicibacterium paratuberculosis (strain ATCC BAA-968 / K-10) (Mycobacterium paratuberculosis).